The sequence spans 271 residues: Ribosomal RNA small subunit methyltransferase A (271 aa).

The S-adenosyl-L-methionine site is built by Asn18, Leu20, Gly45, Glu66, Asp91, and Asn112.

The protein belongs to the class I-like SAM-binding methyltransferase superfamily. rRNA adenine N(6)-methyltransferase family. RsmA subfamily.

It localises to the cytoplasm. The enzyme catalyses adenosine(1518)/adenosine(1519) in 16S rRNA + 4 S-adenosyl-L-methionine = N(6)-dimethyladenosine(1518)/N(6)-dimethyladenosine(1519) in 16S rRNA + 4 S-adenosyl-L-homocysteine + 4 H(+). Functionally, specifically dimethylates two adjacent adenosines (A1518 and A1519) in the loop of a conserved hairpin near the 3'-end of 16S rRNA in the 30S particle. May play a critical role in biogenesis of 30S subunits. The chain is Ribosomal RNA small subunit methyltransferase A from Vibrio cholerae serotype O1 (strain ATCC 39315 / El Tor Inaba N16961).